Here is a 167-residue protein sequence, read N- to C-terminus: CDP-archaeol synthase (167 aa).

Transmembrane regions (helical) follow at residues 4-24 (ILEA…PVIL), 51-71 (GFLG…IIYP), 80-100 (FKVS…GSFI), 104-124 (LNLP…LISA), and 139-158 (VLLL…VLAY).

Belongs to the CDP-archaeol synthase family. Mg(2+) is required as a cofactor.

The protein resides in the cell membrane. It catalyses the reaction 2,3-bis-O-(geranylgeranyl)-sn-glycerol 1-phosphate + CTP + H(+) = CDP-2,3-bis-O-(geranylgeranyl)-sn-glycerol + diphosphate. It participates in membrane lipid metabolism; glycerophospholipid metabolism. In terms of biological role, catalyzes the formation of CDP-2,3-bis-(O-geranylgeranyl)-sn-glycerol (CDP-archaeol) from 2,3-bis-(O-geranylgeranyl)-sn-glycerol 1-phosphate (DGGGP) and CTP. This reaction is the third ether-bond-formation step in the biosynthesis of archaeal membrane lipids. The polypeptide is CDP-archaeol synthase (Pyrococcus furiosus (strain ATCC 43587 / DSM 3638 / JCM 8422 / Vc1)).